A 449-amino-acid chain; its full sequence is Deoxyguanosinetriphosphate triphosphohydrolase-like protein (449 aa).

The interval methionine 1–arginine 27 is disordered. The span at glutamine 7–arginine 27 shows a compositional bias: basic and acidic residues. Residues arginine 59–alanine 255 enclose the HD domain.

This sequence belongs to the dGTPase family. Type 2 subfamily.

This Shewanella baltica (strain OS195) protein is Deoxyguanosinetriphosphate triphosphohydrolase-like protein.